The sequence spans 443 residues: Carbohydrate sulfotransferase 9 (443 aa).

The Cytoplasmic segment spans residues 1 to 12 (MQPSEMVMNPKQ). The helical; Signal-anchor for type II membrane protein transmembrane segment at 13-33 (VFLSVLIFGVAGLLLFMYLQV) threads the bilayer. Residues 34–443 (WIEEQHTGRV…LMFNYTTPFL (410 aa)) are Lumenal-facing. A compositionally biased stretch (polar residues) spans 108–128 (LTKTSHSQGGDQALSKSTGSP). Residues 108–132 (LTKTSHSQGGDQALSKSTGSPTEKL) are disordered. N159 carries N-linked (GlcNAc...) asparagine glycosylation. 3'-phosphoadenylyl sulfate is bound at residue 220 to 226 (PKAGCSN). N243 is a glycosylation site (N-linked (GlcNAc...) asparagine). Residue 280–288 (RDPMERLVS) coordinates 3'-phosphoadenylyl sulfate. Residues N324 and N437 are each glycosylated (N-linked (GlcNAc...) asparagine).

The protein belongs to the sulfotransferase 2 family. Highly expressed in trachea. Also expressed in fetal lung, adult pancreas, testis and salivary gland. Expressed at low level in pituitary gland, apex of the heart, adult lung, prostate and mammary gland. Weakly or not expressed in heart, liver and spinal cord.

It localises to the golgi apparatus membrane. Its subcellular location is the secreted. Catalyzes the transfer of sulfate to position 4 of non-reducing N-acetylgalactosamine (GalNAc) residues in both N-glycans and O-glycans. Participates in biosynthesis of glycoprotein hormones lutropin and thyrotropin, by mediating sulfation of their carbohydrate structures. Has a higher activity toward carbonic anhydrase VI than toward lutropin. Only active against terminal GalNAcbeta1,GalNAcbeta. Isoform 2, but not isoform 1, is active toward chondroitin. This Homo sapiens (Human) protein is Carbohydrate sulfotransferase 9 (CHST9).